The sequence spans 196 residues: Imidazoleglycerol-phosphate dehydratase (196 aa).

Belongs to the imidazoleglycerol-phosphate dehydratase family.

The protein localises to the cytoplasm. The enzyme catalyses D-erythro-1-(imidazol-4-yl)glycerol 3-phosphate = 3-(imidazol-4-yl)-2-oxopropyl phosphate + H2O. It participates in amino-acid biosynthesis; L-histidine biosynthesis; L-histidine from 5-phospho-alpha-D-ribose 1-diphosphate: step 6/9. This Chlorobium chlorochromatii (strain CaD3) protein is Imidazoleglycerol-phosphate dehydratase.